The following is a 192-amino-acid chain: Protein SHORT HYPOCOTYL IN WHITE LIGHT 1 (192 aa).

Positions 43–50 match the Nuclear localization signal motif; that stretch reads FRRLNRSL. Residues 70–92 are disordered; it reads GGDNYDVVPDDDGFSDDDDEEDE. Positions 77–92 are enriched in acidic residues; that stretch reads VPDDDGFSDDDDEEDE. The next 2 membrane-spanning stretches (helical) occupy residues 122-142 and 159-179; these read ILPAAMSPRLVSFAVDGILLL and GGTVFTVILLIRLFWAAASFF.

Interacts with HY5 and COP1 in the nucleus. As to expression, expressed in young seedlings (e.g. hypocotyl and cotyledons) and in green tissues (e.g. leaves, stems, sepals, and young siliques).

The protein localises to the nucleus membrane. Negative regulator of photomorphogenesis modulating both light and abscisic acid (ABA) signaling pathways. Negatively regulates the light-mediated inhibition of hypocotyl elongation, probably in a PHYB-mediated signaling pathway, but promotes flowering time (especially in long days) and lateral root formation. Enhances light-regulated gene expression. Promotes COP1-mediated degradation of HY5 during seedling development (e.g. hypocotyl growth) through enhanced ubiquitination in the darkness. Also involved in root gravitropism. The sequence is that of Protein SHORT HYPOCOTYL IN WHITE LIGHT 1 from Arabidopsis thaliana (Mouse-ear cress).